The following is a 322-amino-acid chain: Replication factor C small subunit (322 aa).

45–52 serves as a coordination point for ATP; the sequence is GPPGVGKT.

It belongs to the activator 1 small subunits family. RfcS subfamily. As to quaternary structure, heteromultimer composed of small subunits (RfcS) and large subunits (RfcL).

Functionally, part of the RFC clamp loader complex which loads the PCNA sliding clamp onto DNA. This is Replication factor C small subunit from Methanocella arvoryzae (strain DSM 22066 / NBRC 105507 / MRE50).